Consider the following 90-residue polypeptide: Molybdopterin synthase sulfur carrier subunit (90 aa).

The residue at position 90 (Gly-90) is a 1-thioglycine; alternate. Residue Gly-90 is modified to Glycyl adenylate; alternate.

This sequence belongs to the MoaD family. MOCS2A subfamily. In terms of assembly, heterotetramer; composed of 2 small (Mocs2A) and 2 large (Mocs2B) subunits. C-terminal thiocarboxylation occurs in 2 steps, it is first acyl-adenylated (-COAMP) via the hesA/moeB/thiF part of MOCS3, then thiocarboxylated (-COSH) via the rhodanese domain of MOCS3.

The protein resides in the cytoplasm. Its pathway is cofactor biosynthesis; molybdopterin biosynthesis. Its function is as follows. Acts as a sulfur carrier required for molybdopterin biosynthesis. Component of the molybdopterin synthase complex that catalyzes the conversion of precursor Z into molybdopterin by mediating the incorporation of 2 sulfur atoms into precursor Z to generate a dithiolene group. In the complex, serves as sulfur donor by being thiocarboxylated (-COSH) at its C-terminus by MOCS3. After interaction with Mocs2B, the sulfur is then transferred to precursor Z to form molybdopterin. This is Molybdopterin synthase sulfur carrier subunit from Drosophila erecta (Fruit fly).